The following is a 306-amino-acid chain: B- and T-lymphocyte attenuator (306 aa).

Positions Met1 to Cys29 are cleaved as a signal peptide. Residues Glu30–Tyr183 are Extracellular-facing. An Ig-like V-type domain is found at Asp37–Thr139. Disulfide bonds link Cys40/Cys69, Cys64/Cys124, and Cys78/Cys85. N-linked (GlcNAc...) asparagine glycosylation is found at Asn74, Asn81, Asn101, Asn119, Asn148, and Asn165. The chain crosses the membrane as a helical span at residues Thr184–Leu204. Topologically, residues Lys205–Ser306 are cytoplasmic.

In terms of assembly, interacts with tyrosine phosphatases PTPN6/SHP-1 and PTPN11/SHP-2. Interacts with TNFRSF14/HVEM (via cysteine-rich domain 1). In terms of processing, phosphorylated on Tyr residues by TNFRSF14 and by antigen receptors cross-linking, both inducing association with PTPN6 and PTPN11. N-glycosylated. Expressed in splenic T- and B-cells as well as lymph node tissues but very weakly in somatic tissues. Also expressed in macrophages, NK cells and dendritic cells. A polymorphic tissue distribution between several strains is seen.

It is found in the cell membrane. Its function is as follows. Inhibitory receptor on lymphocytes that negatively regulates antigen receptor signaling via PTPN6/SHP-1 and PTPN11/SHP-2. May interact in cis (on the same cell) or in trans (on other cells) with TNFRSF14. In cis interactions, appears to play an immune regulatory role inhibiting in trans interactions in naive T cells to maintain a resting state. In trans interactions, can predominate during adaptive immune response to provide survival signals to effector T cells. This Mus musculus (Mouse) protein is B- and T-lymphocyte attenuator.